We begin with the raw amino-acid sequence, 87 residues long: Phosphoribosyl-ATP pyrophosphatase (87 aa).

The protein belongs to the PRA-PH family.

The protein localises to the cytoplasm. It carries out the reaction 1-(5-phospho-beta-D-ribosyl)-ATP + H2O = 1-(5-phospho-beta-D-ribosyl)-5'-AMP + diphosphate + H(+). The protein operates within amino-acid biosynthesis; L-histidine biosynthesis; L-histidine from 5-phospho-alpha-D-ribose 1-diphosphate: step 2/9. The polypeptide is Phosphoribosyl-ATP pyrophosphatase (Arthrobacter sp. (strain FB24)).